The chain runs to 225 residues: Uracil-DNA glycosylase (225 aa).

Residue D65 is the Proton acceptor of the active site.

The protein belongs to the uracil-DNA glycosylase (UDG) superfamily. UNG family.

The protein resides in the cytoplasm. The enzyme catalyses Hydrolyzes single-stranded DNA or mismatched double-stranded DNA and polynucleotides, releasing free uracil.. Its function is as follows. Excises uracil residues from the DNA which can arise as a result of misincorporation of dUMP residues by DNA polymerase or due to deamination of cytosine. This chain is Uracil-DNA glycosylase, found in Bacillus mycoides (strain KBAB4) (Bacillus weihenstephanensis).